Reading from the N-terminus, the 157-residue chain is Phosphopantetheine adenylyltransferase (157 aa).

A substrate-binding site is contributed by Thr10. Residues 10-11 (TF) and His18 contribute to the ATP site. Residues Lys42, Leu74, and Arg88 each coordinate substrate. ATP is bound by residues 89-91 (GLR), Glu99, and 124-130 (NAFISSS).

This sequence belongs to the bacterial CoaD family. As to quaternary structure, homohexamer. Mg(2+) is required as a cofactor.

It localises to the cytoplasm. It catalyses the reaction (R)-4'-phosphopantetheine + ATP + H(+) = 3'-dephospho-CoA + diphosphate. It functions in the pathway cofactor biosynthesis; coenzyme A biosynthesis; CoA from (R)-pantothenate: step 4/5. In terms of biological role, reversibly transfers an adenylyl group from ATP to 4'-phosphopantetheine, yielding dephospho-CoA (dPCoA) and pyrophosphate. The sequence is that of Phosphopantetheine adenylyltransferase from Helicobacter acinonychis (strain Sheeba).